The following is a 365-amino-acid chain: Transcription factor TCP2 (365 aa).

The TCP domain maps to 42–100; it reads GKDRHSKVLTSKGPRDRRVRLSVSTALQFYDLQDRLGYDQPSKAVEWLIKAAEDSISEL. The segment covering 130 to 150 has biased composition (low complexity); the sequence is KSACSSNSDTSKNSSGLSLSR. Disordered stretches follow at residues 130–202 and 220–245; these read KSAC…SAPS and QTHFPISTNSHPFSSISDHHHHHPHH. A R domain is found at 151–172; that stretch reads SELRDKARERARERTAKETKER. Positions 151-176 are enriched in basic and acidic residues; it reads SELRDKARERARERTAKETKERDHNH. Residues 177-202 are compositionally biased toward polar residues; it reads TSFTDLLNSGSDPVNSNRQWMASAPS.

In terms of assembly, interacts with SPL. Interacts with CRY1. Expressed in cotyledons, particularly in the vascular region, in leaves, roots, buds, flowers and immature siliques.

Its subcellular location is the nucleus. Plays a pivotal role in the control of morphogenesis of shoot organs by negatively regulating the expression of boundary-specific genes such as CUC genes, probably through the induction of miRNA (e.g. miR164). Participates in ovule development. Promotes light-regulated transcription of CHS, CAB, HYH and HY5. Positively regulates photomorphogenesis (e.g. hypocotyl elongation inhibition and cotyledon opening in response to blue light). In Arabidopsis thaliana (Mouse-ear cress), this protein is Transcription factor TCP2.